The sequence spans 1266 residues: 5-oxoprolinase 1 (1266 aa).

It belongs to the oxoprolinase family. Expressed in roots, stems, leaves, flowers and siliques.

The protein resides in the cytoplasm. The enzyme catalyses 5-oxo-L-proline + ATP + 2 H2O = L-glutamate + ADP + phosphate + H(+). In terms of biological role, catalyzes the cleavage of 5-oxo-L-proline to form L-glutamate coupled to the hydrolysis of ATP to ADP and inorganic phosphate. Acts in the glutathione degradation pathway. This is 5-oxoprolinase 1 from Arabidopsis thaliana (Mouse-ear cress).